A 555-amino-acid chain; its full sequence is Chaperonin GroEL 2 (555 aa).

ATP is bound by residues 29-32 (TLGP), 86-90 (DGTTT), Gly-414, 480-482 (NAL), and Asp-496.

It belongs to the chaperonin (HSP60) family. As to quaternary structure, forms a cylinder of 14 subunits composed of two heptameric rings stacked back-to-back. Interacts with the co-chaperonin GroES.

It is found in the cytoplasm. The catalysed reaction is ATP + H2O + a folded polypeptide = ADP + phosphate + an unfolded polypeptide.. In terms of biological role, together with its co-chaperonin GroES, plays an essential role in assisting protein folding. The GroEL-GroES system forms a nano-cage that allows encapsulation of the non-native substrate proteins and provides a physical environment optimized to promote and accelerate protein folding. This Synechococcus sp. (strain ATCC 27144 / PCC 6301 / SAUG 1402/1) (Anacystis nidulans) protein is Chaperonin GroEL 2.